We begin with the raw amino-acid sequence, 323 residues long: MSAVCGGAARMLRTPGRHGYAAEFSPYLPGRLACATAQHYGIAGCGTLLILDPDEAGLRLFRSFDWNDGLFDVTWSENNEHVLITCSGDGSLQLWDTAKAAGPLQVYKEHAQEVYSVDWSQTRGEQLVVSGSWDQTVKLWDPTVGKSLCTFRGHESIIYSTIWSPHIPGCFASASGDQTLRIWDVKAAGVRIVIPAHQAEILSCDWCKYNENLLVTGAVDCSLRGWDLRNVRQPVFELLGHTYAIRRVKFSPFHASVLASCSYDFTVRFWNFSKPDSLLETVEHHTEFTCGLDFSLQSPTQVADCSWDETIKIYDPACLTIPA.

WD repeat units lie at residues Asp-65–Asp-96, Glu-109–Asp-141, Gly-153–Asp-184, Ala-196–Asp-227, Gly-240–Asn-271, and His-284–Asp-315.

It belongs to the WD repeat peroxin-7 family. As to quaternary structure, interacts with PEX5; interaction only takes place when PEX7 is associated with cargo proteins. Interacts with VWA8. In terms of tissue distribution, ubiquitous. Highest expression in pancreas, skeletal muscle and heart.

It is found in the cytoplasm. It localises to the cytosol. The protein resides in the peroxisome matrix. Receptor required for the peroxisomal import of proteins containing a C-terminal PTS2-type peroxisomal targeting signal. Specifically binds to cargo proteins containing a PTS2 peroxisomal targeting signal in the cytosol. Cargo protein-binding triggers interaction with PEX5 and formation of a ternary complex composed of PEX5 and PEX7 along with PTS2-containing cargo proteins, which is tranlocated into peroxisomes by passing through the PEX13-PEX14 docking complex. This chain is Peroxisomal targeting signal 2 receptor, found in Homo sapiens (Human).